The sequence spans 253 residues: Vitamin B12 import ATP-binding protein BtuD (253 aa).

The ABC transporter domain occupies 4–236 (LQLNNVSVGT…DVLSQVFEVD (233 aa)). 32 to 39 (GPNGAGKS) serves as a coordination point for ATP.

It belongs to the ABC transporter superfamily. Vitamin B12 importer (TC 3.A.1.13.1) family. The complex is composed of two ATP-binding proteins (BtuD), two transmembrane proteins (BtuC) and a solute-binding protein (BtuF).

It localises to the cell inner membrane. It catalyses the reaction an R-cob(III)alamin(out) + ATP + H2O = an R-cob(III)alamin(in) + ADP + phosphate + H(+). Part of the ABC transporter complex BtuCDF involved in vitamin B12 import. Responsible for energy coupling to the transport system. This is Vitamin B12 import ATP-binding protein BtuD from Yersinia pestis.